Reading from the N-terminus, the 117-residue chain is Large ribosomal subunit protein bL20 (117 aa).

Belongs to the bacterial ribosomal protein bL20 family.

Functionally, binds directly to 23S ribosomal RNA and is necessary for the in vitro assembly process of the 50S ribosomal subunit. It is not involved in the protein synthesizing functions of that subunit. This is Large ribosomal subunit protein bL20 from Photobacterium profundum (strain SS9).